Reading from the N-terminus, the 597-residue chain is tRNA uridine 5-carboxymethylaminomethyl modification enzyme MnmG (597 aa).

11 to 16 is a binding site for FAD; it reads GAGHAG. An NAD(+)-binding site is contributed by 275-289; it reads SPRYCPSIEEKIERY.

Belongs to the MnmG family. As to quaternary structure, homodimer. Heterotetramer of two MnmE and two MnmG subunits. FAD is required as a cofactor.

The protein resides in the cytoplasm. NAD-binding protein involved in the addition of a carboxymethylaminomethyl (cmnm) group at the wobble position (U34) of certain tRNAs, forming tRNA-cmnm(5)s(2)U34. The sequence is that of tRNA uridine 5-carboxymethylaminomethyl modification enzyme MnmG from Endomicrobium trichonymphae.